The chain runs to 41 residues: Large ribosomal subunit protein bL36B (41 aa).

This sequence belongs to the bacterial ribosomal protein bL36 family.

The polypeptide is Large ribosomal subunit protein bL36B (Actinobacillus pleuropneumoniae serotype 5b (strain L20)).